Here is a 306-residue protein sequence, read N- to C-terminus: Mitochondrial basic amino acids transporter (306 aa).

The next 6 helical transmembrane spans lie at 2–22 (ALDFLAGCAGGVAGVIVGHPF), 61–81 (GLGSPLMGLTFINALVFGVQG), 96–116 (FLAGAAAGAIQCVICCPMELA), 153–172 (GMVSTLLRETPSFGVYFLTY), 187–207 (LLVPKLLLAGGTSGITSWLST), and 255–275 (LLRAFPVNAATFATVTVVLTY). 3 Solcar repeats span residues 2 to 86 (ALDF…TLRA), 90 to 178 (DSPL…LTRA), and 190 to 275 (PKLL…VLTY). A disordered region spans residues 283-306 (VDSEAAPGASTTPAGPALAQPSSL). Over residues 287–306 (AAPGASTTPAGPALAQPSSL) the composition is skewed to low complexity.

This sequence belongs to the mitochondrial carrier (TC 2.A.29) family.

The protein resides in the mitochondrion inner membrane. The catalysed reaction is L-lysine(out) + L-arginine(in) = L-lysine(in) + L-arginine(out). It catalyses the reaction L-histidine(out) + L-arginine(in) = L-histidine(in) + L-arginine(out). It carries out the reaction L-ornithine(in) + L-arginine(out) = L-ornithine(out) + L-arginine(in). The enzyme catalyses L-homoarginine(in) + L-arginine(out) = L-homoarginine(out) + L-arginine(in). The catalysed reaction is N(omega)-methyl-L-arginine(in) + L-arginine(out) = N(omega)-methyl-L-arginine(out) + L-arginine(in). It catalyses the reaction L-arginine(in) = L-arginine(out). It carries out the reaction L-lysine(in) = L-lysine(out). The enzyme catalyses L-ornithine(in) = L-ornithine(out). The catalysed reaction is L-histidine(out) = L-histidine(in). In terms of biological role, mitochondrial transporter of arginine, lysine, homoarginine, methylarginine and, to a much lesser extent, ornithine and histidine. Does not transport carnitine nor acylcarnitines. Functions by both counter-exchange and uniport mechanisms. Plays a physiological role in the import of basic amino acids into mitochondria for mitochondrial protein synthesis and amino acid degradation. The polypeptide is Mitochondrial basic amino acids transporter (Slc25a29) (Rattus norvegicus (Rat)).